We begin with the raw amino-acid sequence, 494 residues long: Glycerol kinase (494 aa).

Thr12 serves as a coordination point for ADP. ATP contacts are provided by Thr12, Thr13, and Ser14. Position 12 (Thr12) interacts with sn-glycerol 3-phosphate. Arg16 serves as a coordination point for ADP. Residues Arg82, Glu83, Tyr134, and Asp244 each contribute to the sn-glycerol 3-phosphate site. Glycerol contacts are provided by Arg82, Glu83, Tyr134, Asp244, and Gln245. Positions 266 and 309 each coordinate ADP. The ATP site is built by Thr266, Gly309, Gln313, and Gly410. ADP contacts are provided by Gly410 and Asn414.

Belongs to the FGGY kinase family. As to quaternary structure, homotetramer and homodimer (in equilibrium).

It carries out the reaction glycerol + ATP = sn-glycerol 3-phosphate + ADP + H(+). It functions in the pathway polyol metabolism; glycerol degradation via glycerol kinase pathway; sn-glycerol 3-phosphate from glycerol: step 1/1. With respect to regulation, activated by phosphorylation and inhibited by fructose 1,6-bisphosphate (FBP). Functionally, key enzyme in the regulation of glycerol uptake and metabolism. Catalyzes the phosphorylation of glycerol to yield sn-glycerol 3-phosphate. The sequence is that of Glycerol kinase from Desulfitobacterium hafniense (strain DSM 10664 / DCB-2).